We begin with the raw amino-acid sequence, 114 residues long: Large ribosomal subunit protein bL19 (114 aa).

The protein belongs to the bacterial ribosomal protein bL19 family.

Functionally, this protein is located at the 30S-50S ribosomal subunit interface and may play a role in the structure and function of the aminoacyl-tRNA binding site. This chain is Large ribosomal subunit protein bL19 (rplS), found in Listeria monocytogenes serovar 1/2a (strain ATCC BAA-679 / EGD-e).